The sequence spans 207 residues: ATP synthase subunit b 2 (207 aa).

Residues 53-72 form a helical membrane-spanning segment; that stretch reads TYASQLLWLVITFSVFYLLM.

The protein belongs to the ATPase B chain family. As to quaternary structure, F-type ATPases have 2 components, F(1) - the catalytic core - and F(0) - the membrane proton channel. F(1) has five subunits: alpha(3), beta(3), gamma(1), delta(1), epsilon(1). F(0) has three main subunits: a(1), b(2) and c(10-14). The alpha and beta chains form an alternating ring which encloses part of the gamma chain. F(1) is attached to F(0) by a central stalk formed by the gamma and epsilon chains, while a peripheral stalk is formed by the delta and b chains.

The protein resides in the cell inner membrane. In terms of biological role, f(1)F(0) ATP synthase produces ATP from ADP in the presence of a proton or sodium gradient. F-type ATPases consist of two structural domains, F(1) containing the extramembraneous catalytic core and F(0) containing the membrane proton channel, linked together by a central stalk and a peripheral stalk. During catalysis, ATP synthesis in the catalytic domain of F(1) is coupled via a rotary mechanism of the central stalk subunits to proton translocation. Functionally, component of the F(0) channel, it forms part of the peripheral stalk, linking F(1) to F(0). The b'-subunit is a diverged and duplicated form of b found in plants and photosynthetic bacteria. The protein is ATP synthase subunit b 2 (atpF2) of Rhizobium leguminosarum bv. trifolii (strain WSM2304).